Reading from the N-terminus, the 275-residue chain is Large ribosomal subunit protein uL2 (275 aa).

Residues 221–275 (RGMTMNPVDHPMGGGEGRSKGHIPQSPWGIPAKGYKTRKSKKPSDKLIVKRRKQK) are disordered.

This sequence belongs to the universal ribosomal protein uL2 family. Part of the 50S ribosomal subunit. Forms a bridge to the 30S subunit in the 70S ribosome.

Functionally, one of the primary rRNA binding proteins. Required for association of the 30S and 50S subunits to form the 70S ribosome, for tRNA binding and peptide bond formation. It has been suggested to have peptidyltransferase activity; this is somewhat controversial. Makes several contacts with the 16S rRNA in the 70S ribosome. The sequence is that of Large ribosomal subunit protein uL2 from Kosmotoga olearia (strain ATCC BAA-1733 / DSM 21960 / TBF 19.5.1).